Here is a 394-residue protein sequence, read N- to C-terminus: 3-dehydroquinate synthase (394 aa).

Residues 112–116, 136–137, K149, K158, and 176–179 contribute to the NAD(+) site; these read GVIGD, TT, and TLAT. The Zn(2+) site is built by E191, H254, and H276. Polar residues predominate over residues 371–388; the sequence is STNQHTTYSPHQHATTKP. The interval 371-394 is disordered; the sequence is STNQHTTYSPHQHATTKPPNRRPH.

Belongs to the sugar phosphate cyclases superfamily. Dehydroquinate synthase family. It depends on NAD(+) as a cofactor. Co(2+) is required as a cofactor. The cofactor is Zn(2+).

Its subcellular location is the cytoplasm. It catalyses the reaction 7-phospho-2-dehydro-3-deoxy-D-arabino-heptonate = 3-dehydroquinate + phosphate. Its pathway is metabolic intermediate biosynthesis; chorismate biosynthesis; chorismate from D-erythrose 4-phosphate and phosphoenolpyruvate: step 2/7. Its function is as follows. Catalyzes the conversion of 3-deoxy-D-arabino-heptulosonate 7-phosphate (DAHP) to dehydroquinate (DHQ). The protein is 3-dehydroquinate synthase of Xylella fastidiosa (strain 9a5c).